The primary structure comprises 194 residues: Imidazoleglycerol-phosphate dehydratase (194 aa).

This sequence belongs to the imidazoleglycerol-phosphate dehydratase family.

It localises to the cytoplasm. The catalysed reaction is D-erythro-1-(imidazol-4-yl)glycerol 3-phosphate = 3-(imidazol-4-yl)-2-oxopropyl phosphate + H2O. The protein operates within amino-acid biosynthesis; L-histidine biosynthesis; L-histidine from 5-phospho-alpha-D-ribose 1-diphosphate: step 6/9. The polypeptide is Imidazoleglycerol-phosphate dehydratase (Bacillus cereus (strain ATCC 14579 / DSM 31 / CCUG 7414 / JCM 2152 / NBRC 15305 / NCIMB 9373 / NCTC 2599 / NRRL B-3711)).